A 207-amino-acid polypeptide reads, in one-letter code: Small ribosomal subunit protein uS4 (207 aa).

Residues 31-54 (KCKLDSKPGQHGRTSGARTSDYGN) form a disordered region. The span at 42 to 53 (GRTSGARTSDYG) shows a compositional bias: polar residues. An S4 RNA-binding domain is found at 97-160 (SRLDNVVYRM…KKQVRIAEAL (64 aa)).

Belongs to the universal ribosomal protein uS4 family. As to quaternary structure, part of the 30S ribosomal subunit. Contacts protein S5. The interaction surface between S4 and S5 is involved in control of translational fidelity.

In terms of biological role, one of the primary rRNA binding proteins, it binds directly to 16S rRNA where it nucleates assembly of the body of the 30S subunit. With S5 and S12 plays an important role in translational accuracy. This chain is Small ribosomal subunit protein uS4, found in Cupriavidus metallidurans (strain ATCC 43123 / DSM 2839 / NBRC 102507 / CH34) (Ralstonia metallidurans).